A 238-amino-acid polypeptide reads, in one-letter code: Ribonuclease PH (238 aa).

Residues R86 and 124-126 (GTR) each bind phosphate.

It belongs to the RNase PH family. Homohexameric ring arranged as a trimer of dimers.

It carries out the reaction tRNA(n+1) + phosphate = tRNA(n) + a ribonucleoside 5'-diphosphate. In terms of biological role, phosphorolytic 3'-5' exoribonuclease that plays an important role in tRNA 3'-end maturation. Removes nucleotide residues following the 3'-CCA terminus of tRNAs; can also add nucleotides to the ends of RNA molecules by using nucleoside diphosphates as substrates, but this may not be physiologically important. Probably plays a role in initiation of 16S rRNA degradation (leading to ribosome degradation) during starvation. The polypeptide is Ribonuclease PH (Haemophilus influenzae (strain PittEE)).